The sequence spans 1802 residues: Bromodomain and WD repeat-containing protein 3 (1802 aa).

WD repeat units lie at residues 170–209 (IKMHKRILGHLSSVYCVAFDRSGRRIFTGSDDCLVKIWAT), 213–251 (RLLATLRGHSAEISDMAVNYENTLIAAGSCDKVVRVWCL), 255–297 (APVA…FWQW), 307–347 (RPVK…IYYL), 353–393 (EKIA…IWQY), 400–452 (SIVL…VWNS), 456–495 (QLLHTLSGHDDEVFVLEAHPFDQRIILSAGHDGNIFIWDL), and 502–542 (RNYF…LFGF). Phosphoserine is present on residues Ser-693 and Ser-703. The segment at 768-910 (KPSYTTQRND…PKQTRKKKGG (143 aa)) is disordered. A compositionally biased stretch (basic residues) spans 785–795 (SLRRTQRKRQH). Positions 796-817 (TYQTRSNIEHNSQASCQNSGVQ) are enriched in polar residues. Acidic residues predominate over residues 818-829 (EDSDSSSEEDET). Over residues 846 to 859 (SESSSSDSSSEYSD) the composition is skewed to low complexity. A phosphoserine mark is found at Ser-885 and Ser-886. Residues 889 to 898 (ENLKSLEERQ) show a composition bias toward basic and acidic residues. A compositionally biased stretch (basic residues) spans 899 to 909 (KKPKQTRKKKG). Residues 1138 to 1245 (WGAHSRDEEC…DVLLRFIGDQ (108 aa)) enclose the Bromo 1 domain. Disordered regions lie at residues 1262–1292 (RNSTDAEEDTEIVDLDSDGPGTSSGRKVKCR), 1326–1361 (RQPADLLSYPGHQEQEGESSESVVPERQQDSSLSED), 1438–1500 (IQSQ…SPVS), and 1520–1725 (SSSS…RAKR). A compositionally biased stretch (acidic residues) spans 1266-1278 (DAEEDTEIVDLDS). A Bromo 2 domain is found at 1300–1430 (CNPDAWKKQC…ALFESHIKNI (131 aa)). Residues 1441-1453 (QKRRRPRYRKRLR) show a composition bias toward basic residues. Over residues 1454–1468 (SSSSSLSSSGAPSPK) the composition is skewed to low complexity. The span at 1479-1499 (KNDQNTSVSHARTSSPFSSPV) shows a compositional bias: polar residues. Over residues 1520–1533 (SSSSFGGYSRSGNS) the composition is skewed to low complexity. Phosphoserine occurs at positions 1577 and 1579. Basic and acidic residues predominate over residues 1587–1600 (GEDKEKKETKEKSH). The span at 1601-1626 (LSTSESGELGSSLSSESTCGSDSDSE) shows a compositional bias: low complexity. Over residues 1627 to 1643 (STSRTDQDYVDGDHDYS) the composition is skewed to basic and acidic residues. Composition is skewed to basic residues over residues 1649 to 1666 (RPKRKLRKQHGNGKRNWK) and 1684 to 1697 (RGGRGRGGRGRGSR). Ser-1763 carries the phosphoserine modification.

As to expression, found in most adult tissues. Down-regulated in a majority of the B-CLL cases examined.

Its function is as follows. Plays a role in the regulation of cell morphology and cytoskeletal organization. Required in the control of cell shape. This Homo sapiens (Human) protein is Bromodomain and WD repeat-containing protein 3 (BRWD3).